A 466-amino-acid chain; its full sequence is Fumarate hydratase class II (466 aa).

Substrate is bound by residues 100–102 (SGT), arginine 128, 131–134 (HPND), 141–143 (STN), and threonine 189. Histidine 190 serves as the catalytic Proton donor/acceptor. Residue serine 320 is part of the active site. Substrate-binding positions include serine 321 and 326–328 (KVN).

This sequence belongs to the class-II fumarase/aspartase family. Fumarase subfamily. In terms of assembly, homotetramer.

The protein localises to the cytoplasm. The enzyme catalyses (S)-malate = fumarate + H2O. Its pathway is carbohydrate metabolism; tricarboxylic acid cycle; (S)-malate from fumarate: step 1/1. Functionally, involved in the TCA cycle. Catalyzes the stereospecific interconversion of fumarate to L-malate. In Prochlorococcus marinus (strain MIT 9313), this protein is Fumarate hydratase class II.